The sequence spans 427 residues: Enolase (427 aa).

Q163 serves as a coordination point for (2R)-2-phosphoglycerate. The active-site Proton donor is E205. Residues D242, E285, and D312 each contribute to the Mg(2+) site. Positions 337, 366, 367, and 388 each coordinate (2R)-2-phosphoglycerate. The Proton acceptor role is filled by K337.

Belongs to the enolase family. The cofactor is Mg(2+).

Its subcellular location is the cytoplasm. The protein resides in the secreted. The protein localises to the cell surface. It catalyses the reaction (2R)-2-phosphoglycerate = phosphoenolpyruvate + H2O. It functions in the pathway carbohydrate degradation; glycolysis; pyruvate from D-glyceraldehyde 3-phosphate: step 4/5. Catalyzes the reversible conversion of 2-phosphoglycerate (2-PG) into phosphoenolpyruvate (PEP). It is essential for the degradation of carbohydrates via glycolysis. In Rhodopseudomonas palustris (strain BisB5), this protein is Enolase.